A 270-amino-acid polypeptide reads, in one-letter code: Transmembrane protein 176B (270 aa).

4 consecutive transmembrane segments (helical) span residues 65-85 (LALGVTQILLGVVSCVLGVCL), 95-115 (ASGCAFWAGSVVIAAGAGAIV), 127-147 (ISSLLTLAGFATAMAAVVLCV), and 209-229 (LFLAVCVLKVIVSLVSLGVGL). 4 positions are modified to phosphoserine: serine 236, serine 245, serine 254, and serine 258. Residues 237 to 270 (SQPLNEEGSEKRLLGENSVPPSPSREQTSTAIVL) are disordered. The span at 260-270 (SREQTSTAIVL) shows a compositional bias: polar residues.

Belongs to the TMEM176 family. In terms of tissue distribution, expressed in lung and dermal fibroblasts.

The protein resides in the nucleus membrane. May play a role in the process of maturation of dendritic cells. Required for the development of cerebellar granule cells. This Homo sapiens (Human) protein is Transmembrane protein 176B (TMEM176B).